Consider the following 242-residue polypeptide: Biosynthetic peptidoglycan transglycosylase (242 aa).

The chain crosses the membrane as a helical span at residues 19–39; that stretch reads ILAALAVFWGGGIALFSVVPV.

This sequence belongs to the glycosyltransferase 51 family.

Its subcellular location is the cell inner membrane. It carries out the reaction [GlcNAc-(1-&gt;4)-Mur2Ac(oyl-L-Ala-gamma-D-Glu-L-Lys-D-Ala-D-Ala)](n)-di-trans,octa-cis-undecaprenyl diphosphate + beta-D-GlcNAc-(1-&gt;4)-Mur2Ac(oyl-L-Ala-gamma-D-Glu-L-Lys-D-Ala-D-Ala)-di-trans,octa-cis-undecaprenyl diphosphate = [GlcNAc-(1-&gt;4)-Mur2Ac(oyl-L-Ala-gamma-D-Glu-L-Lys-D-Ala-D-Ala)](n+1)-di-trans,octa-cis-undecaprenyl diphosphate + di-trans,octa-cis-undecaprenyl diphosphate + H(+). Its pathway is cell wall biogenesis; peptidoglycan biosynthesis. In terms of biological role, peptidoglycan polymerase that catalyzes glycan chain elongation from lipid-linked precursors. The sequence is that of Biosynthetic peptidoglycan transglycosylase from Salmonella schwarzengrund (strain CVM19633).